The sequence spans 70 residues: Large ribosomal subunit protein bL33m (70 aa).

Belongs to the bacterial ribosomal protein bL33 family. In terms of assembly, component of the mitochondrial large ribosomal subunit (mt-LSU). Mature yeast 74S mitochondrial ribosomes consist of a small (37S) and a large (54S) subunit. The 37S small subunit contains a 15S ribosomal RNA (15S mt-rRNA) and 34 different proteins. The 54S large subunit contains a 21S rRNA (21S mt-rRNA) and 46 different proteins. bL33m stabilizes the tRNA acceptor stem in the E-site.

The protein resides in the mitochondrion. Component of the mitochondrial ribosome (mitoribosome), a dedicated translation machinery responsible for the synthesis of mitochondrial genome-encoded proteins, including at least some of the essential transmembrane subunits of the mitochondrial respiratory chain. The mitoribosomes are attached to the mitochondrial inner membrane and translation products are cotranslationally integrated into the membrane. This is Large ribosomal subunit protein bL33m (MRPL39) from Saccharomyces cerevisiae (strain ATCC 204508 / S288c) (Baker's yeast).